The chain runs to 213 residues: Adenylate kinase (213 aa).

ATP is bound at residue 10 to 15; sequence GAGKGT. An NMP region spans residues 30–59; the sequence is STGDMFRAAMANQTEMGLLAKSYIDKGDLV. AMP is bound by residues Thr31, Arg36, 57–59, 86–89, and Gln93; these read DLV and GYPR. The interval 127 to 160 is LID; it reads GRIIHKKTGETFHKIFNPPAGDYDENDYYQREDD. Residues Arg128 and 137–138 contribute to the ATP site; that span reads TF. AMP contacts are provided by Arg157 and Arg168. Position 196 (Gln196) interacts with ATP.

This sequence belongs to the adenylate kinase family. Monomer.

It localises to the cytoplasm. It catalyses the reaction AMP + ATP = 2 ADP. Its pathway is purine metabolism; AMP biosynthesis via salvage pathway; AMP from ADP: step 1/1. Functionally, catalyzes the reversible transfer of the terminal phosphate group between ATP and AMP. Plays an important role in cellular energy homeostasis and in adenine nucleotide metabolism. The chain is Adenylate kinase from Streptococcus uberis (strain ATCC BAA-854 / 0140J).